Reading from the N-terminus, the 443-residue chain is Proline--tRNA ligase (443 aa).

It belongs to the class-II aminoacyl-tRNA synthetase family. ProS type 2 subfamily. In terms of assembly, homodimer.

The protein resides in the cytoplasm. It carries out the reaction tRNA(Pro) + L-proline + ATP = L-prolyl-tRNA(Pro) + AMP + diphosphate. Its function is as follows. Catalyzes the attachment of proline to tRNA(Pro) in a two-step reaction: proline is first activated by ATP to form Pro-AMP and then transferred to the acceptor end of tRNA(Pro). The polypeptide is Proline--tRNA ligase (Methylobacterium nodulans (strain LMG 21967 / CNCM I-2342 / ORS 2060)).